A 137-amino-acid polypeptide reads, in one-letter code: Phosphoribosyl-AMP cyclohydrolase (137 aa).

Mg(2+) is bound at residue Asp-84. A Zn(2+)-binding site is contributed by Cys-85. Mg(2+)-binding residues include Asp-86 and Asp-88. Zn(2+) contacts are provided by Cys-101 and Cys-108.

The protein belongs to the PRA-CH family. As to quaternary structure, homodimer. Requires Mg(2+) as cofactor. Zn(2+) serves as cofactor.

The protein localises to the cytoplasm. It catalyses the reaction 1-(5-phospho-beta-D-ribosyl)-5'-AMP + H2O = 1-(5-phospho-beta-D-ribosyl)-5-[(5-phospho-beta-D-ribosylamino)methylideneamino]imidazole-4-carboxamide. It functions in the pathway amino-acid biosynthesis; L-histidine biosynthesis; L-histidine from 5-phospho-alpha-D-ribose 1-diphosphate: step 3/9. Its function is as follows. Catalyzes the hydrolysis of the adenine ring of phosphoribosyl-AMP. The chain is Phosphoribosyl-AMP cyclohydrolase from Pelodictyon phaeoclathratiforme (strain DSM 5477 / BU-1).